Reading from the N-terminus, the 170-residue chain is uncharacterized protein (170 aa).

A coiled-coil region spans residues 15–81; that stretch reads EAFDEKAEKE…EREKSKSAVS (67 aa). Residues 20–77 are compositionally biased toward basic and acidic residues; the sequence is KAEKEKVEKEKALKEKTEKEKAEKEKAEKEKVEKEKAEKEKAAKEKAAKEKAEREKSK. Residues 20–95 are disordered; the sequence is KAEKEKVEKE…NQNSNKGNVE (76 aa). Residues 78–92 show a composition bias toward polar residues; it reads SAVSPATTNQNSNKG. The chain crosses the membrane as a helical span at residues 98–118; it reads VAIGVLAGGAVTGVAVGGAYL.

The protein localises to the membrane. This is an uncharacterized protein from Dictyostelium discoideum (Social amoeba).